A 696-amino-acid chain; its full sequence is Tensin-4 (696 aa).

Positions 1 to 14 are cleaved as a signal peptide; that stretch reads MSSSLLAGGHMVSL. Disordered regions lie at residues 157–246, 271–344, and 356–416; these read LDGP…RAPQ, SLPH…CPAS, and LING…KDMQ. A compositionally biased stretch (polar residues) spans 192 to 203; it reads SSSNESLIFSGN. Serine 230 is subject to Phosphoserine. Low complexity predominate over residues 271–304; that stretch reads SLPHSSLSSYPSSSRSLGSPASSSSSLHSLDRGS. Composition is skewed to polar residues over residues 326–344 and 372–397; these read QAVQ…CPAS and PGHQ…SPSK. Residues 429 to 536 enclose the SH2 domain; that stretch reads WFKPSITREQ…ALPCKLTIPQ (108 aa). Positions 563-690 constitute a PTB domain; it reads CHTLYLSSVS…QVISLVTALL (128 aa).

Belongs to the PTEN phosphatase protein family. In terms of assembly, interacts (via SH2 domain) with Rho GTPase-activating protein DLC1 (via C-terminus); the interaction is independent of DLC1 tyrosine phosphorylation. Interacts with integrin ITGB1; the interaction displaces tensin TNS3 from the ITGB1 cytoplasmic tail and promotes ITGB1 stability. Interacts (via SH2 domain) with E3 ubiquitin-protein ligase CBL (phosphorylated on 'Tyr-780'); the interaction is enhanced in the presence of EGF and reduces interaction of CBL with EGFR. Interacts (via SH2 domain) with receptor tyrosine kinase MET (when phosphorylated); the interaction increases MET protein stability.

It localises to the cell junction. The protein resides in the focal adhesion. It is found in the cytoplasm. The protein localises to the cytoskeleton. Functionally, promotes EGF-induced cell migration by displacing tensin TNS3 from the cytoplasmic tail of integrin ITGB1 which results in dissociation of TNS3 from focal adhesions, disassembly of actin stress fibers and initiation of cell migration. Suppresses ligand-induced degradation of EGFR by reducing EGFR ubiquitination in the presence of EGF. Increases MET protein stability by inhibiting MET endocytosis and subsequent lysosomal degradation which leads to increased cell survival, proliferation and migration. The sequence is that of Tensin-4 (Tns4) from Mus musculus (Mouse).